A 581-amino-acid polypeptide reads, in one-letter code: Fibrous sheath-interacting protein 1 (581 aa).

The interval 1–77 (MDIIKGNLDG…SNDDKQESCS (77 aa)) is disordered. The span at 14–30 (PASNSRIRPGSRSSNAS) shows a compositional bias: polar residues. A compositionally biased stretch (basic and acidic residues) spans 52–77 (GKEDHSESSNTENRRTSNDDKQESCS). Serine 87 is modified (phosphoserine). Residues 105–153 (EPKLKELDSQLQDAIQKMKKLDKILAKKQRREKEIKKQGLEMRIKLWEE) are a coiled coil. Disordered stretches follow at residues 338–365 (SSFS…VTPG) and 555–581 (HLKL…CKEP). Composition is skewed to basic and acidic residues over residues 344-360 (LENR…ERNM) and 569-581 (QETK…CKEP).

This sequence belongs to the FSIP1 family.

This Homo sapiens (Human) protein is Fibrous sheath-interacting protein 1 (FSIP1).